The sequence spans 651 residues: Probable ATP-dependent helicase MJ0942 (651 aa).

The region spanning 6-255 is the Helicase ATP-binding domain; it reads YIKEKFPYPK…EIIEKYLTSR (250 aa). ATP is bound at residue 41-48; the sequence is APTGVGKT. Cys102, Cys149, and Cys154 together coordinate [4Fe-4S] cluster. Residues 195–198 carry the DEAH box motif; sequence DEAH. Residues 449–638 enclose the Helicase C-terminal domain; it reads NLLKILEAIN…NYEVMSLDMA (190 aa).

It belongs to the helicase family. DinG subfamily. It depends on [4Fe-4S] cluster as a cofactor.

It catalyses the reaction Couples ATP hydrolysis with the unwinding of duplex DNA at the replication fork by translocating in the 5'-3' direction. This creates two antiparallel DNA single strands (ssDNA). The leading ssDNA polymer is the template for DNA polymerase III holoenzyme which synthesizes a continuous strand.. The catalysed reaction is ATP + H2O = ADP + phosphate + H(+). Functionally, might be a 5'-3' DNA helicase. The chain is Probable ATP-dependent helicase MJ0942 from Methanocaldococcus jannaschii (strain ATCC 43067 / DSM 2661 / JAL-1 / JCM 10045 / NBRC 100440) (Methanococcus jannaschii).